Consider the following 635-residue polypeptide: tRNA uridine 5-carboxymethylaminomethyl modification enzyme MnmG (635 aa).

An FAD-binding site is contributed by Gly15–Gly20. NAD(+) is bound at residue Gly276–Phe290.

Belongs to the MnmG family. As to quaternary structure, homodimer. Heterotetramer of two MnmE and two MnmG subunits. It depends on FAD as a cofactor.

It localises to the cytoplasm. Its function is as follows. NAD-binding protein involved in the addition of a carboxymethylaminomethyl (cmnm) group at the wobble position (U34) of certain tRNAs, forming tRNA-cmnm(5)s(2)U34. This Streptococcus sanguinis (strain SK36) protein is tRNA uridine 5-carboxymethylaminomethyl modification enzyme MnmG.